Reading from the N-terminus, the 130-residue chain is MSNVPAELKYVESHEWVRAEGNDEYTVGITEHAQELLGDMVFVDLPEVGDQINLGDDCAVVESVKAASDIYAPLSGKIIAVNDALNDAPELVNSEPYHEGWLFRIKASDKSELSSLLNAEGYQALLDEEE.

Residues 24–106 (EYTVGITEHA…YHEGWLFRIK (83 aa)) form the Lipoyl-binding domain. Residue Lys65 is modified to N6-lipoyllysine.

The protein belongs to the GcvH family. As to quaternary structure, the glycine cleavage system is composed of four proteins: P, T, L and H. (R)-lipoate serves as cofactor.

The glycine cleavage system catalyzes the degradation of glycine. The H protein shuttles the methylamine group of glycine from the P protein to the T protein. The sequence is that of Glycine cleavage system H protein from Photorhabdus laumondii subsp. laumondii (strain DSM 15139 / CIP 105565 / TT01) (Photorhabdus luminescens subsp. laumondii).